A 712-amino-acid chain; its full sequence is Eukaryotic translation initiation factor 3 subunit B (712 aa).

Position 1 is an N-acetylmethionine (Met1). Residues Asn56–Asp143 enclose the RRM domain.

Belongs to the eIF-3 subunit B family. Component of the eukaryotic translation initiation factor 3 (eIF-3) complex, which is composed of at least 13 different subunits. Binds to the translation initiation factor TIF3H1.

The protein resides in the cytoplasm. Its function is as follows. RNA-binding component of the eukaryotic translation initiation factor 3 (eIF-3) complex, which is involved in protein synthesis of a specialized repertoire of mRNAs and, together with other initiation factors, stimulates binding of mRNA and methionyl-tRNAi to the 40S ribosome. The eIF-3 complex specifically targets and initiates translation of a subset of mRNAs involved in cell proliferation. The sequence is that of Eukaryotic translation initiation factor 3 subunit B (TIF3B1) from Arabidopsis thaliana (Mouse-ear cress).